We begin with the raw amino-acid sequence, 573 residues long: Sulfate adenylyltransferase (573 aa).

The N-terminal stretch occupies residues 1–169; it reads MANSPHGGVL…IEAVNKLNHY (169 aa). The tract at residues 170-394 is catalytic; the sequence is DYVALRYTPA…LRESSPPRHT (225 aa). A sulfate-binding site is contributed by Gln197. ATP-binding positions include 197 to 200 and 291 to 294; these read QTRN and GRDH. Catalysis depends on residues Thr198, Arg199, and Asn200. Arg199 contributes to the sulfate binding site. Ala295 provides a ligand contact to sulfate. Val333 contacts ATP. Positions 395-573 are allosteric regulation domain; adenylyl-sulfate kinase-like; sequence QGFTVFLTGY…LETEGFFDRA (179 aa). Residues 434–437, Arg451, 477–478, and Arg515 contribute to the 3'-phosphoadenylyl sulfate site; these read DTVR and IA.

It in the N-terminal section; belongs to the sulfate adenylyltransferase family. The protein in the C-terminal section; belongs to the APS kinase family. As to quaternary structure, homohexamer. Dimer of trimers.

The protein resides in the cytoplasm. It carries out the reaction sulfate + ATP + H(+) = adenosine 5'-phosphosulfate + diphosphate. Its pathway is sulfur metabolism; hydrogen sulfide biosynthesis; sulfite from sulfate: step 1/3. With respect to regulation, allosterically inhibited by 3'-phosphoadenosine 5'-phosphosulfate (PAPS). Catalyzes the first intracellular reaction of sulfate assimilation, forming adenosine-5'-phosphosulfate (APS) from inorganic sulfate and ATP. Plays an important role in sulfate activation as a component of the biosynthesis pathway of sulfur-containing amino acids. In Aspergillus oryzae (strain ATCC 42149 / RIB 40) (Yellow koji mold), this protein is Sulfate adenylyltransferase.